The chain runs to 147 residues: uncharacterized protein (147 aa).

The segment at 29-147 is disordered; that stretch reads PYGNNSVHQG…GHHHGHHHKH (119 aa). Polar residues-rich tracts occupy residues 34 to 45 and 60 to 73; these read SVHQGQPHTDQN and PQAQ…NQPS. Over residues 75–92 the composition is skewed to gly residues; sequence PFGGAGYTGPTAGTGFGN. Residues 122–147 are compositionally biased toward basic residues; the sequence is DGHHKKHGRKEHDHHHGHHHGHHHKH.

This is an uncharacterized protein from Caenorhabditis elegans.